Reading from the N-terminus, the 451-residue chain is uncharacterized protein (451 aa).

Positions 1 to 22 (MKLKLIFSLFLVLVFCSLFVFG) are cleaved as a signal peptide. 5 N-linked (GlcNAc...) asparagine glycosylation sites follow: asparagine 25, asparagine 45, asparagine 209, asparagine 326, and asparagine 402.

It localises to the secreted. This is an uncharacterized protein from Dictyostelium discoideum (Social amoeba).